The following is a 545-amino-acid chain: Probable protein kinase UbiB (545 aa).

Residues 123-501 form the Protein kinase domain; the sequence is DFEPIALASA…QIKQRQSQYL (379 aa). Residues 129–137 and K152 each bind ATP; that span reads LASASIAQV. Catalysis depends on D287, which acts as the Proton acceptor. Residues 508-528 form a helical membrane-spanning segment; it reads LFLCGSLFLLSGLANIPWLFI.

The protein belongs to the ABC1 family. UbiB subfamily.

Its subcellular location is the cell inner membrane. Its pathway is cofactor biosynthesis; ubiquinone biosynthesis [regulation]. Its function is as follows. Is probably a protein kinase regulator of UbiI activity which is involved in aerobic coenzyme Q (ubiquinone) biosynthesis. The polypeptide is Probable protein kinase UbiB (Photorhabdus laumondii subsp. laumondii (strain DSM 15139 / CIP 105565 / TT01) (Photorhabdus luminescens subsp. laumondii)).